The following is a 273-amino-acid chain: Ribosomal RNA small subunit methyltransferase A (273 aa).

Positions 18, 20, 45, 66, 91, and 113 each coordinate S-adenosyl-L-methionine.

Belongs to the class I-like SAM-binding methyltransferase superfamily. rRNA adenine N(6)-methyltransferase family. RsmA subfamily.

Its subcellular location is the cytoplasm. The catalysed reaction is adenosine(1518)/adenosine(1519) in 16S rRNA + 4 S-adenosyl-L-methionine = N(6)-dimethyladenosine(1518)/N(6)-dimethyladenosine(1519) in 16S rRNA + 4 S-adenosyl-L-homocysteine + 4 H(+). In terms of biological role, specifically dimethylates two adjacent adenosines (A1518 and A1519) in the loop of a conserved hairpin near the 3'-end of 16S rRNA in the 30S particle. May play a critical role in biogenesis of 30S subunits. This is Ribosomal RNA small subunit methyltransferase A from Shigella dysenteriae serotype 1 (strain Sd197).